A 704-amino-acid chain; its full sequence is Elongation factor G (704 aa).

A tr-type G domain is found at 8-290 (ARYRNIGISA…AVIDYLPSPV (283 aa)). GTP contacts are provided by residues 17 to 24 (AHIDAGKT), 88 to 92 (DTPGH), and 142 to 145 (NKMD). N6-acetyllysine is present on residues K504 and K643.

The protein belongs to the TRAFAC class translation factor GTPase superfamily. Classic translation factor GTPase family. EF-G/EF-2 subfamily.

It localises to the cytoplasm. Its function is as follows. Catalyzes the GTP-dependent ribosomal translocation step during translation elongation. During this step, the ribosome changes from the pre-translocational (PRE) to the post-translocational (POST) state as the newly formed A-site-bound peptidyl-tRNA and P-site-bound deacylated tRNA move to the P and E sites, respectively. Catalyzes the coordinated movement of the two tRNA molecules, the mRNA and conformational changes in the ribosome. This chain is Elongation factor G, found in Shigella flexneri.